A 166-amino-acid polypeptide reads, in one-letter code: Large ribosomal subunit protein uL10 (166 aa).

This sequence belongs to the universal ribosomal protein uL10 family. Part of the ribosomal stalk of the 50S ribosomal subunit. The N-terminus interacts with L11 and the large rRNA to form the base of the stalk. The C-terminus forms an elongated spine to which L12 dimers bind in a sequential fashion forming a multimeric L10(L12)X complex.

In terms of biological role, forms part of the ribosomal stalk, playing a central role in the interaction of the ribosome with GTP-bound translation factors. This Aeromonas salmonicida (strain A449) protein is Large ribosomal subunit protein uL10.